Here is a 179-residue protein sequence, read N- to C-terminus: GTP-dependent dephospho-CoA kinase (179 aa).

The GTP site is built by Asp50, Val51, Val52, Asp69, Lys71, and Glu126.

This sequence belongs to the GTP-dependent DPCK family.

It carries out the reaction 3'-dephospho-CoA + GTP = GDP + CoA + H(+). Its pathway is cofactor biosynthesis; coenzyme A biosynthesis. Catalyzes the GTP-dependent phosphorylation of the 3'-hydroxyl group of dephosphocoenzyme A to form coenzyme A (CoA). The sequence is that of GTP-dependent dephospho-CoA kinase from Pyrococcus horikoshii (strain ATCC 700860 / DSM 12428 / JCM 9974 / NBRC 100139 / OT-3).